A 277-amino-acid chain; its full sequence is 2-dehydro-3-deoxyphosphooctonate aldolase (277 aa).

It belongs to the KdsA family.

It is found in the cytoplasm. It carries out the reaction D-arabinose 5-phosphate + phosphoenolpyruvate + H2O = 3-deoxy-alpha-D-manno-2-octulosonate-8-phosphate + phosphate. It functions in the pathway carbohydrate biosynthesis; 3-deoxy-D-manno-octulosonate biosynthesis; 3-deoxy-D-manno-octulosonate from D-ribulose 5-phosphate: step 2/3. Its pathway is bacterial outer membrane biogenesis; lipopolysaccharide biosynthesis. The protein is 2-dehydro-3-deoxyphosphooctonate aldolase of Brucella canis (strain ATCC 23365 / NCTC 10854 / RM-666).